The primary structure comprises 513 residues: MKRALISVSDKTNLVDFAKGLVQNGYEIISTGGTKKTLDEAGVKTISVEEVTNFPEILDGRVKTLNPYIHGGLLAKRDDLEHMATLEKLNIKPIDLVCVNLYPFKQTIEKPDVTTEEAIENIDIGGPSLLRAASKNYQDVTVVTDKNDYDLVLKEIAEKGNTTLETRAKLAAKVFRATAAYDAVIANYLTKQVGLEDPEKLTLTYDLKEKMRYGENSHQKAWLYEDAIPKSFSILQAHQLHGKKLSYNNIKDADEALRCIREFQDEPTVVAMKHMNPCGIGRGDTLEEAWDRAYEADSVSIFGGVIALNRKVDLATAKKMHKIFLEIIIAPGFDDDALEVLEKKKNIRLLKLDFSKENEPTRPEIVSVMGGILQQEQDTLVENTDDWKVVTNAQPTEAQLKTMMFALKAVKHTKSNAIVVANDERTLGVGAGQPNRIDSAKIAIKHAGDAIDDRAVLSSDAFFPFNDCVEYAAKHGIKAIVQPGGSIRDKDSIEIADKYGVAMVFTGYRHFRH.

In terms of domain architecture, MGS-like spans 1 to 144; it reads MKRALISVSD…KNYQDVTVVT (144 aa).

This sequence belongs to the PurH family.

The enzyme catalyses (6R)-10-formyltetrahydrofolate + 5-amino-1-(5-phospho-beta-D-ribosyl)imidazole-4-carboxamide = 5-formamido-1-(5-phospho-D-ribosyl)imidazole-4-carboxamide + (6S)-5,6,7,8-tetrahydrofolate. The catalysed reaction is IMP + H2O = 5-formamido-1-(5-phospho-D-ribosyl)imidazole-4-carboxamide. It participates in purine metabolism; IMP biosynthesis via de novo pathway; 5-formamido-1-(5-phospho-D-ribosyl)imidazole-4-carboxamide from 5-amino-1-(5-phospho-D-ribosyl)imidazole-4-carboxamide (10-formyl THF route): step 1/1. It functions in the pathway purine metabolism; IMP biosynthesis via de novo pathway; IMP from 5-formamido-1-(5-phospho-D-ribosyl)imidazole-4-carboxamide: step 1/1. The chain is Bifunctional purine biosynthesis protein PurH from Lactobacillus acidophilus (strain ATCC 700396 / NCK56 / N2 / NCFM).